Here is an 893-residue protein sequence, read N- to C-terminus: TBC domain-containing protein kinase-like protein (893 aa).

A Protein kinase domain is found at 1–273 (MFPLKDAEMG…PDELMKDQVF (273 aa)). The region spanning 466–651 (DIPPLMRGLT…HLWDTLLLGN (186 aa)) is the Rab-GAP TBC domain.

This sequence belongs to the protein kinase superfamily. As to quaternary structure, component of the FERRY complex composed of five subunits, TBCK, PPP1R21, FERRY3, CRYZL1 and GATD1 with a ratio of 1:2:1:2:4, respectively.

The protein resides in the cytoplasm. The protein localises to the cytoskeleton. It is found in the spindle. Its subcellular location is the midbody. It localises to the early endosome. Functionally, component of the FERRY complex (Five-subunit Endosomal Rab5 and RNA/ribosome intermediary). The FERRY complex directly interacts with mRNAs and RAB5A, and functions as a RAB5A effector involved in the localization and the distribution of specific mRNAs most likely by mediating their endosomal transport. The complex recruits mRNAs and ribosomes to early endosomes through direct mRNA-interaction. Also involved in the modulation of mTOR signaling and expression of mTOR complex components. Involved in the control of actin-cytoskeleton organization. This Mus musculus (Mouse) protein is TBC domain-containing protein kinase-like protein (Tbck).